A 275-amino-acid polypeptide reads, in one-letter code: Translation initiation factor 2 subunit alpha (275 aa).

The 72-residue stretch at 12–83 (GELVVATVKR…KKGHIDLSLR (72 aa)) folds into the S1 motif domain.

This sequence belongs to the eIF-2-alpha family. In terms of assembly, heterotrimer composed of an alpha, a beta and a gamma chain.

In terms of biological role, eIF-2 functions in the early steps of protein synthesis by forming a ternary complex with GTP and initiator tRNA. This chain is Translation initiation factor 2 subunit alpha, found in Pyrococcus furiosus (strain ATCC 43587 / DSM 3638 / JCM 8422 / Vc1).